The sequence spans 382 residues: Flap endonuclease 1-B (382 aa).

The N-domain stretch occupies residues 1–104; sequence MGIHGLAKLI…GELAKRSERR (104 aa). Aspartate 34 lines the Mg(2+) pocket. 2 residues coordinate DNA: arginine 47 and arginine 70. Positions 86, 158, 160, 179, and 181 each coordinate Mg(2+). Residues 122-253 form an I-domain region; it reads NIEKFNKRLV…KRAIDLIRQH (132 aa). Residue glutamate 158 participates in DNA binding. DNA contacts are provided by glycine 231 and aspartate 233. Mg(2+) is bound at residue aspartate 233. An interaction with PCNA region spans residues 336–344; it reads TQGRLDDFF. A disordered region spans residues 352–382; the sequence is STKRKEVESKGSTKKKSKTGGTPAGKFKRGK.

Belongs to the XPG/RAD2 endonuclease family. FEN1 subfamily. Interacts with PCNA. Three molecules of fen1 bind to one PCNA trimer with each molecule binding to one PCNA monomer. PCNA stimulates the nuclease activity without altering cleavage specificity. It depends on Mg(2+) as a cofactor. Post-translationally, phosphorylated. Phosphorylation upon DNA damage induces relocalization to the nuclear plasma.

Its subcellular location is the nucleus. It localises to the nucleolus. The protein localises to the nucleoplasm. It is found in the mitochondrion. In terms of biological role, structure-specific nuclease with 5'-flap endonuclease and 5'-3' exonuclease activities involved in DNA replication and repair. During DNA replication, cleaves the 5'-overhanging flap structure that is generated by displacement synthesis when DNA polymerase encounters the 5'-end of a downstream Okazaki fragment. It enters the flap from the 5'-end and then tracks to cleave the flap base, leaving a nick for ligation. Also involved in the long patch base excision repair (LP-BER) pathway, by cleaving within the apurinic/apyrimidinic (AP) site-terminated flap. Acts as a genome stabilization factor that prevents flaps from equilibrating into structures that lead to duplications and deletions. Also possesses 5'-3' exonuclease activity on nicked or gapped double-stranded DNA, and exhibits RNase H activity. Also involved in replication and repair of rDNA and in repairing mitochondrial DNA. The protein is Flap endonuclease 1-B (fen1-b) of Xenopus laevis (African clawed frog).